A 262-amino-acid polypeptide reads, in one-letter code: 4-hydroxy-2-oxo-heptane-1,7-dioate aldolase (262 aa).

His-45 acts as the Proton acceptor in catalysis. Residue Gln-147 coordinates substrate. Glu-149 contacts a divalent metal cation. Substrate contacts are provided by Ala-174 and Asp-175. Position 175 (Asp-175) interacts with a divalent metal cation.

It belongs to the HpcH/HpaI aldolase family. In terms of assembly, homohexamer; trimer of dimers. A divalent metal cation is required as a cofactor.

The enzyme catalyses 4-hydroxy-2-oxoheptanedioate = succinate semialdehyde + pyruvate. It catalyses the reaction D-glyceraldehyde + 3-hydroxypyruvate = (3R,4S,5R)-3,4,5,6-tetrahydroxy-2-oxohexanoate. It carries out the reaction D-glyceraldehyde + 3-hydroxypyruvate = 2-dehydro-D-gluconate. The catalysed reaction is D-glyceraldehyde + 3-hydroxypyruvate = 2-dehydro-D-galactonate. The enzyme catalyses D-glyceraldehyde + pyruvate = 2-dehydro-3-deoxy-L-galactonate. It catalyses the reaction 2-dehydro-3-deoxy-D-gluconate = D-glyceraldehyde + pyruvate. It participates in aromatic compound metabolism; 4-hydroxyphenylacetate degradation; pyruvate and succinate semialdehyde from 4-hydroxyphenylacetate: step 7/7. Its function is as follows. Catalyzes the reversible retro-aldol cleavage of 4-hydroxy-2-ketoheptane-1,7-dioate (HKHD) to pyruvate and succinic semialdehyde. In vitro, can catalyze the aldolisation reaction between hydroxypyruvate (HPA) or pyruvate (PA) and D-glyceraldehyde (D-GA). The condensation of hydroxypyruvate and D-glyceraldehyde produces (3R,4S,5R)-3,4,5,6-tetrahydroxy-2-oxohexanoate as the major product, 2-dehydro-D-gluconate and 2-dehydro-D-galactonate. The condensation of pyruvate and D-glyceraldehyde produces 2-dehydro-3-deoxy-L-galactonate as the major product and 2-dehydro-3-deoxy-D-gluconate. The polypeptide is 4-hydroxy-2-oxo-heptane-1,7-dioate aldolase (Escherichia coli (strain ATCC 8739 / DSM 1576 / NBRC 3972 / NCIMB 8545 / WDCM 00012 / Crooks)).